The following is a 423-amino-acid chain: Core protease OPG082 (423 aa).

Catalysis depends on residues histidine 241, aspartate 248, and cysteine 328.

The protein belongs to the peptidase C57 family.

The protein resides in the virion. Late protein responsible for processing most or all of the viral core and membrane proteins known to undergo morphogenesis-associated proteolysis. These proteolytic events are involved in the transformation of immature virions (IV) into mature virions (MV). Probably cleaves at least the OPG129, OPG136, OPG098, and OPG144 precursors preferentially at Ala-Gly-|-Ala motifs. Also seems to process Ala-Gly-|-Ser and Ala-Gly-|-Thr motifs. This is Core protease OPG082 (OPG083) from Homo sapiens (Human).